The chain runs to 375 residues: Succinyl-diaminopimelate desuccinylase (375 aa).

Position 66 (His-66) interacts with Zn(2+). The active site involves Asp-68. Residue Asp-99 participates in Zn(2+) binding. Glu-133 (proton acceptor) is an active-site residue. Zn(2+)-binding residues include Glu-134, Glu-162, and His-348.

This sequence belongs to the peptidase M20A family. DapE subfamily. As to quaternary structure, homodimer. Requires Zn(2+) as cofactor. It depends on Co(2+) as a cofactor.

It catalyses the reaction N-succinyl-(2S,6S)-2,6-diaminopimelate + H2O = (2S,6S)-2,6-diaminopimelate + succinate. It functions in the pathway amino-acid biosynthesis; L-lysine biosynthesis via DAP pathway; LL-2,6-diaminopimelate from (S)-tetrahydrodipicolinate (succinylase route): step 3/3. Its function is as follows. Catalyzes the hydrolysis of N-succinyl-L,L-diaminopimelic acid (SDAP), forming succinate and LL-2,6-diaminopimelate (DAP), an intermediate involved in the bacterial biosynthesis of lysine and meso-diaminopimelic acid, an essential component of bacterial cell walls. The polypeptide is Succinyl-diaminopimelate desuccinylase (Escherichia coli O7:K1 (strain IAI39 / ExPEC)).